The primary structure comprises 422 residues: Tyrosine--tRNA ligase (422 aa).

Tyrosine 35 contributes to the L-tyrosine binding site. A 'HIGH' region motif is present at residues 40 to 49 (PTAPSLHVGH). Positions 170 and 174 each coordinate L-tyrosine. Positions 231–235 (KFGKT) match the 'KMSKS' region motif. ATP is bound at residue lysine 234. The region spanning 353–419 (APVVDLFAEV…GKKNLAAVEI (67 aa)) is the S4 RNA-binding domain.

The protein belongs to the class-I aminoacyl-tRNA synthetase family. TyrS type 1 subfamily. As to quaternary structure, homodimer.

Its subcellular location is the cytoplasm. It carries out the reaction tRNA(Tyr) + L-tyrosine + ATP = L-tyrosyl-tRNA(Tyr) + AMP + diphosphate + H(+). Functionally, catalyzes the attachment of tyrosine to tRNA(Tyr) in a two-step reaction: tyrosine is first activated by ATP to form Tyr-AMP and then transferred to the acceptor end of tRNA(Tyr). The sequence is that of Tyrosine--tRNA ligase from Streptomyces coelicolor (strain ATCC BAA-471 / A3(2) / M145).